A 316-amino-acid polypeptide reads, in one-letter code: MLLCVSCLSVNGEMNPLGPTPSVHRSVSFWLLRLSVFLLLSLRDSKGKAIWTAHLNITFQVGNRIISELGESGVFGNHSPLERVSGAVVLPEGWNQNACSPLTNFSRPDQTDTWLALIERGGCTFTHKINLAAEKGANGVIIYNYPGTGNKVFPMSHQGTENIVAVMIGNLKGMELLHLIQQGVYVTIIIEVGRMHMPWLSHYVMSLFTFLAATVTYLFLYCAWRPRVSNSSTRRQRQLKADVKKAIGQLQLRVLQDGDKELDPNEDSCVVCFDMYKAQDVIRILTCKHFFHKTCIDPWLLAHRTCPMCKCDILKP.

The first 12 residues, 1–12 (MLLCVSCLSVNG), serve as a signal peptide directing secretion. Asn56 carries N-linked (GlcNAc...) asparagine glycosylation. A PA domain is found at 84-178 (VSGAVVLPEG…GNLKGMELLH (95 aa)). A run of 2 helical transmembrane segments spans residues 173 to 193 (GMEL…IEVG) and 204 to 224 (VMSL…YCAW). The RING-type; atypical zinc-finger motif lies at 269-310 (CVVCFDMYKAQDVIRILTCKHFFHKTCIDPWLLAHRTCPMCK).

It localises to the membrane. This chain is RING finger protein 148 (Rnf148), found in Mus musculus (Mouse).